Here is a 307-residue protein sequence, read N- to C-terminus: Voltage-dependent anion channel-forming protein alr2987 (307 aa).

4 helical membrane passes run 19–39 (VIGA…LVTL), 47–67 (VSQP…LLVF), 209–229 (PLAY…LLPF), and 238–258 (WTGL…AIGL).

It belongs to the anion channel-forming bestrophin (TC 1.A.46) family.

It localises to the cell membrane. This Nostoc sp. (strain PCC 7120 / SAG 25.82 / UTEX 2576) protein is Voltage-dependent anion channel-forming protein alr2987.